The chain runs to 157 residues: SsrA-binding protein (157 aa).

Positions 132–157 are disordered; the sequence is VHDKRQAQKDKDWAREKDRLFKKAYK. The span at 135-157 shows a compositional bias: basic and acidic residues; it reads KRQAQKDKDWAREKDRLFKKAYK.

It belongs to the SmpB family.

It localises to the cytoplasm. In terms of biological role, required for rescue of stalled ribosomes mediated by trans-translation. Binds to transfer-messenger RNA (tmRNA), required for stable association of tmRNA with ribosomes. tmRNA and SmpB together mimic tRNA shape, replacing the anticodon stem-loop with SmpB. tmRNA is encoded by the ssrA gene; the 2 termini fold to resemble tRNA(Ala) and it encodes a 'tag peptide', a short internal open reading frame. During trans-translation Ala-aminoacylated tmRNA acts like a tRNA, entering the A-site of stalled ribosomes, displacing the stalled mRNA. The ribosome then switches to translate the ORF on the tmRNA; the nascent peptide is terminated with the 'tag peptide' encoded by the tmRNA and targeted for degradation. The ribosome is freed to recommence translation, which seems to be the essential function of trans-translation. The chain is SsrA-binding protein from Francisella tularensis subsp. tularensis (strain FSC 198).